We begin with the raw amino-acid sequence, 323 residues long: Arginase-1 (323 aa).

The disordered stretch occupies residues 1–27 (MSSKPKPIEIIGAPFSKGQPRGGVEKG). Position 17 is an N6-succinyllysine (K17). Residues S62 and S72 each carry the phosphoserine modification. K75 is modified (N6-succinyllysine). The Mn(2+) site is built by H101, D124, H126, and D128. Substrate is bound by residues 126-130 (HTDIN) and 137-139 (SGN). Residue S163 is modified to Phosphoserine. Substrate is bound at residue D183. S217 carries the post-translational modification Phosphoserine. Residues D232 and D234 each contribute to the Mn(2+) site. Substrate contacts are provided by T246 and E277. Phosphothreonine is present on T281.

This sequence belongs to the arginase family. Homotrimer. Interacts with CMTM6. Mn(2+) is required as a cofactor. In terms of tissue distribution, detected in liver (at protein level).

The protein localises to the cytoplasm. It localises to the cytoplasmic granule. The enzyme catalyses L-arginine + H2O = urea + L-ornithine. Its pathway is nitrogen metabolism; urea cycle; L-ornithine and urea from L-arginine: step 1/1. Its activity is regulated as follows. Inactivated by diethyl pyrocarbonate (DEPC). Key element of the urea cycle converting L-arginine to urea and L-ornithine, which is further metabolized into metabolites proline and polyamides that drive collagen synthesis and bioenergetic pathways critical for cell proliferation, respectively; the urea cycle takes place primarily in the liver and, to a lesser extent, in the kidneys. Functionally, functions in L-arginine homeostasis in nonhepatic tissues characterized by the competition between nitric oxide synthase (NOS) and arginase for the available intracellular substrate arginine. Arginine metabolism is a critical regulator of innate and adaptive immune responses. Involved in an antimicrobial effector pathway in polymorphonuclear granulocytes (PMN). Upon PMN cell death is liberated from the phagolysosome and depletes arginine in the microenvironment leading to suppressed T cell and natural killer (NK) cell proliferation and cytokine secretion. In group 2 innate lymphoid cells (ILC2s) promotes acute type 2 inflammation in the lung and is involved in optimal ILC2 proliferation but not survival. Plays a role in the immune response of alternatively activated or M2 macrophages in processes such as wound healing and tissue regeneration, immune defense against multicellular pathogens and parasites, and immune suppression and allergic inflammation; the regulatory outcome seems to be organ specific. In tumor-infiltrating dendritic cells (DCs) and myeloid-derived suppressor cells (MDSCs) plays a role in suppression of T cell-mediated antitumor immunity. This chain is Arginase-1 (Arg1), found in Rattus norvegicus (Rat).